We begin with the raw amino-acid sequence, 493 residues long: Lysostaphin (493 aa).

The N-terminal stretch at 1–23 is a signal peptide; it reads MKKTKNNYYTRPLAIGLSTFALA. A propeptide spanning residues 24–247 is cleaved from the precursor; the sequence is SIVYGGIQNE…ALVQNRTALR (224 aa). 14 tandem repeats follow at residues 49 to 61, 62 to 74, 75 to 87, 88 to 100, 101 to 113, 114 to 126, 127 to 139, 140 to 152, 153 to 165, 166 to 178, 179 to 191, 192 to 204, 205 to 217, and 218 to 230. The tract at residues 49–243 is 15 X 13 AA approximate tandem repeats of A-E-V-E-T-S-K-A-P-V-E-N-T; it reads AEVETSKAPV…ETSKALVQNR (195 aa). Positions 52–232 are disordered; it reads ETSKAPVENT…SKAPVENTAE (181 aa). The 15; approximate repeat unit spans residues 231–243; the sequence is AEVETSKALVQNR. Zn(2+) contacts are provided by His279 and Asp283. Residue His360 is part of the active site. His362 lines the Zn(2+) pocket. In terms of domain architecture, SH3b spans 413-481; sequence SESASFTPNT…YLPVRTWNKS (69 aa).

Belongs to the peptidase M23B family. As to quaternary structure, monomer. It depends on Zn(2+) as a cofactor.

Its subcellular location is the secreted. It catalyses the reaction Hydrolysis of the -Gly-|-Gly- bond in the pentaglycine inter-peptide link joining staphylococcal cell wall peptidoglycans.. Its function is as follows. Lyses staphylococcal cells by hydrolyzing the polyglycine interpeptide bridges of the peptidoglycan. This chain is Lysostaphin (lss), found in Staphylococcus simulans.